Reading from the N-terminus, the 152-residue chain is Large ribosomal subunit protein bL9 (152 aa).

This sequence belongs to the bacterial ribosomal protein bL9 family.

Binds to the 23S rRNA. The chain is Large ribosomal subunit protein bL9 from Prochlorococcus marinus (strain SARG / CCMP1375 / SS120).